Consider the following 136-residue polypeptide: Evasin P991 (136 aa).

Residues 1-28 form the signal peptide; it reads MHSTIVYACLLALAVFVALHGTPLAALA. N-linked (GlcNAc...) asparagine glycosylation is found at Asn41, Asn61, Asn64, Asn78, Asn92, Asn100, and Asn122. 4 disulfide bridges follow: Cys55–Cys77, Cys73–Cys114, Cys90–Cys119, and Cys109–Cys128.

The protein resides in the secreted. Its function is as follows. Salivary chemokine-binding protein which has chemokine-neutralizing activity and binds to host chemokines CCL2, CCL3, CCL3L1, CCL4, CCL4L1, CCL5, CCL6, CCL7, CCL8, CCL9, CCL11, CCL12, CCL13, CCL14, CCL16, CCL17, CCL18, CCL19, CCL22, CCL23, CCL24 and CCL27. In Amblyomma cajennense (Cayenne tick), this protein is Evasin P991.